The chain runs to 91 residues: LYR motif-containing protein 4 (91 aa).

Arginine 6 and lysine 44 together coordinate pantetheine 4'-phosphate. Lysine 47 bears the N6-succinyllysine mark.

Belongs to the complex I LYR family. As to quaternary structure, homodimer. Component of the mitochondrial core iron-sulfur cluster (ISC) complex composed of NFS1, LYRM4, NDUFAB1, ISCU, FXN, and FDX2; this complex is a heterohexamer containing two copies of each monomer. Component of the cyteine desulfurase complex composed of NFS1, LYRM4 and NDUFAB1; this complex contributes to the stability and cysteine desulfurase activity of NFS1. Interacts with FXN; this interaction is nickel-dependent. Interacts with the cytoplasmic form of NFS1; the complex increases the stability of NFS1. Forms a complex with the cytoplasmic form of NFS1; this complex increases the stability and cysteine desulfurase activity of NFS1. Interacts with NFS1. Component of a complex composed of FXN, NFS1, LYRM4 and ISCU.

The protein localises to the mitochondrion. It localises to the nucleus. It participates in cofactor biosynthesis; iron-sulfur cluster biosynthesis. Stabilizing factor, of the core iron-sulfur cluster (ISC) assembly complex, that regulates, in association with NDUFAB1, the stability and the cysteine desulfurase activity of NFS1 and participates in the [2Fe-2S] clusters assembly on the scaffolding protein ISCU. The core iron-sulfur cluster (ISC) assembly complex is involved in the de novo synthesis of a [2Fe-2S] cluster, the first step of the mitochondrial iron-sulfur protein biogenesis. This process is initiated by the cysteine desulfurase complex (NFS1:LYRM4:NDUFAB1) that produces persulfide which is delivered on the scaffold protein ISCU in a FXN-dependent manner. Then this complex is stabilized by FDX2 which provides reducing equivalents to accomplish the [2Fe-2S] cluster assembly. Finally, the [2Fe-2S] cluster is transferred from ISCU to chaperone proteins, including HSCB, HSPA9 and GLRX5. May also participates in the iron-sulfur protein biogenesis in the cytoplasm through its interaction with the cytoplasmic form of NFS1. In Mus musculus (Mouse), this protein is LYR motif-containing protein 4.